The following is a 750-amino-acid chain: Photosystem I P700 chlorophyll a apoprotein A1 (750 aa).

Transmembrane regions (helical) follow at residues 70 to 93 (IFSA…FHGA), 156 to 179 (LYCT…FHYH), 195 to 219 (LNHH…HVSL), 291 to 309 (IAHH…GHMY), 346 to 369 (WHAQ…HHMY), 385 to 411 (LSLF…IFMV), 433 to 455 (AIIS…LYIH), and 531 to 549 (FLVH…LILL). C573 and C582 together coordinate [4Fe-4S] cluster. 2 helical membrane passes run 589–610 (HVFL…HFSW) and 664–686 (LSAY…MFLF). Chlorophyll a' is bound at residue H675. 2 residues coordinate chlorophyll a: M683 and Y691. Residue W692 coordinates phylloquinone. A helical membrane pass occupies residues 724 to 744 (AVGVTHYLLGGIATTWAFFLA).

It belongs to the PsaA/PsaB family. As to quaternary structure, the PsaA/B heterodimer binds the P700 chlorophyll special pair and subsequent electron acceptors. PSI consists of a core antenna complex that captures photons, and an electron transfer chain that converts photonic excitation into a charge separation. The eukaryotic PSI reaction center is composed of at least 11 subunits. Requires P700 is a chlorophyll a/chlorophyll a' dimer, A0 is one or more chlorophyll a, A1 is one or both phylloquinones and FX is a shared 4Fe-4S iron-sulfur center. as cofactor.

It localises to the plastid. It is found in the chloroplast thylakoid membrane. It catalyses the reaction reduced [plastocyanin] + hnu + oxidized [2Fe-2S]-[ferredoxin] = oxidized [plastocyanin] + reduced [2Fe-2S]-[ferredoxin]. PsaA and PsaB bind P700, the primary electron donor of photosystem I (PSI), as well as the electron acceptors A0, A1 and FX. PSI is a plastocyanin-ferredoxin oxidoreductase, converting photonic excitation into a charge separation, which transfers an electron from the donor P700 chlorophyll pair to the spectroscopically characterized acceptors A0, A1, FX, FA and FB in turn. Oxidized P700 is reduced on the lumenal side of the thylakoid membrane by plastocyanin. In Nandina domestica (Heavenly bamboo), this protein is Photosystem I P700 chlorophyll a apoprotein A1.